Here is a 98-residue protein sequence, read N- to C-terminus: Co-chaperonin GroES 3 (98 aa).

Belongs to the GroES chaperonin family. In terms of assembly, heptamer of 7 subunits arranged in a ring. Interacts with the chaperonin GroEL.

Its subcellular location is the cytoplasm. Together with the chaperonin GroEL, plays an essential role in assisting protein folding. The GroEL-GroES system forms a nano-cage that allows encapsulation of the non-native substrate proteins and provides a physical environment optimized to promote and accelerate protein folding. GroES binds to the apical surface of the GroEL ring, thereby capping the opening of the GroEL channel. The sequence is that of Co-chaperonin GroES 3 from Mesorhizobium japonicum (strain LMG 29417 / CECT 9101 / MAFF 303099) (Mesorhizobium loti (strain MAFF 303099)).